Consider the following 256-residue polypeptide: Adenosylcobinamide-GDP ribazoletransferase (256 aa).

6 helical membrane-spanning segments follow: residues 40–60, 64–84, 114–134, 143–163, 194–214, and 234–254; these read YFPL…WLVL, PAQG…TGAF, IGAF…QLLS, ILVA…SHLL, VVPL…GLIL, and CLGM…LAWM.

This sequence belongs to the CobS family. Requires Mg(2+) as cofactor.

It localises to the cell inner membrane. It catalyses the reaction alpha-ribazole + adenosylcob(III)inamide-GDP = adenosylcob(III)alamin + GMP + H(+). It carries out the reaction alpha-ribazole 5'-phosphate + adenosylcob(III)inamide-GDP = adenosylcob(III)alamin 5'-phosphate + GMP + H(+). It functions in the pathway cofactor biosynthesis; adenosylcobalamin biosynthesis; adenosylcobalamin from cob(II)yrinate a,c-diamide: step 7/7. Joins adenosylcobinamide-GDP and alpha-ribazole to generate adenosylcobalamin (Ado-cobalamin). Also synthesizes adenosylcobalamin 5'-phosphate from adenosylcobinamide-GDP and alpha-ribazole 5'-phosphate. This chain is Adenosylcobinamide-GDP ribazoletransferase, found in Ralstonia pickettii (strain 12J).